A 570-amino-acid polypeptide reads, in one-letter code: Enhancer of polycomb-like protein 1 (570 aa).

Residues 541–570 (ALNNLNSGQTSGQTMGSNPGPGAIAPTPET) are disordered. Residues 543 to 557 (NNLNSGQTSGQTMGS) are compositionally biased toward polar residues.

This sequence belongs to the enhancer of polycomb family. Component of the NuA4 histone acetyltransferase complex.

Its subcellular location is the nucleus. Functionally, component of the NuA4 histone acetyltransferase complex which is involved in transcriptional activation of selected genes principally by acetylation of nucleosomal histone H4 and H2A. The NuA4 complex is also involved in DNA repair. Involved in gene silencing by neighboring heterochromatin, blockage of the silencing spreading along the chromosome, and required for cell cycle progression through G2/M. The chain is Enhancer of polycomb-like protein 1 (epl1) from Emericella nidulans (strain FGSC A4 / ATCC 38163 / CBS 112.46 / NRRL 194 / M139) (Aspergillus nidulans).